Reading from the N-terminus, the 805-residue chain is Leucine--tRNA ligase (805 aa).

The 'HIGH' region motif lies at 40 to 51; that stretch reads PYPSGAGLHVGH. A 'KMSKS' region motif is present at residues 576-580; that stretch reads KMSKS. K579 contributes to the ATP binding site.

Belongs to the class-I aminoacyl-tRNA synthetase family.

The protein resides in the cytoplasm. The enzyme catalyses tRNA(Leu) + L-leucine + ATP = L-leucyl-tRNA(Leu) + AMP + diphosphate. This chain is Leucine--tRNA ligase, found in Geobacillus kaustophilus (strain HTA426).